The sequence spans 88 residues: Small ribosomal subunit protein bS20 (88 aa).

The protein belongs to the bacterial ribosomal protein bS20 family.

In terms of biological role, binds directly to 16S ribosomal RNA. This chain is Small ribosomal subunit protein bS20, found in Clostridium botulinum (strain 657 / Type Ba4).